Reading from the N-terminus, the 313-residue chain is Ribosomal RNA small subunit methyltransferase H (313 aa).

S-adenosyl-L-methionine contacts are provided by residues 35–37 (GGH), Asp-55, Phe-79, Asp-101, and Gln-108.

Belongs to the methyltransferase superfamily. RsmH family.

It is found in the cytoplasm. The enzyme catalyses cytidine(1402) in 16S rRNA + S-adenosyl-L-methionine = N(4)-methylcytidine(1402) in 16S rRNA + S-adenosyl-L-homocysteine + H(+). Functionally, specifically methylates the N4 position of cytidine in position 1402 (C1402) of 16S rRNA. The sequence is that of Ribosomal RNA small subunit methyltransferase H from Erwinia tasmaniensis (strain DSM 17950 / CFBP 7177 / CIP 109463 / NCPPB 4357 / Et1/99).